We begin with the raw amino-acid sequence, 342 residues long: Isopentenyl-diphosphate delta-isomerase (342 aa).

11-12 contributes to the substrate binding site; sequence RK. Residues serine 68, 69–71, serine 99, and asparagine 127 each bind FMN; that span reads SMT. Residue 99–101 participates in substrate binding; sequence SMR. Residue glutamate 163 participates in Mg(2+) binding. Residues lysine 194, threonine 224, and 295–296 each bind FMN; that span reads AG.

It belongs to the IPP isomerase type 2 family. As to quaternary structure, homooctamer. Dimer of tetramers. FMN is required as a cofactor. It depends on NADPH as a cofactor. Requires Mg(2+) as cofactor.

It localises to the cytoplasm. It catalyses the reaction isopentenyl diphosphate = dimethylallyl diphosphate. Functionally, involved in the biosynthesis of isoprenoids. Catalyzes the 1,3-allylic rearrangement of the homoallylic substrate isopentenyl (IPP) to its allylic isomer, dimethylallyl diphosphate (DMAPP). The sequence is that of Isopentenyl-diphosphate delta-isomerase from Rickettsia typhi (strain ATCC VR-144 / Wilmington).